The following is a 375-amino-acid chain: Protein kinase MCK1 (375 aa).

At S2 the chain carries N-acetylserine. Positions 35–327 (VKEYRKIGRG…PRRILAHQFF (293 aa)) constitute a Protein kinase domain. ATP-binding positions include 41-49 (IGRGAFGTV) and K68. The active-site Proton acceptor is the D164. Phosphoserine is present on S198. A Phosphotyrosine modification is found at Y199. Position 202 is a phosphoserine (S202).

This sequence belongs to the protein kinase superfamily. Ser/Thr protein kinase family. In terms of processing, phosphorylated at tyrosine and serine.

The catalysed reaction is L-seryl-[protein] + ATP = O-phospho-L-seryl-[protein] + ADP + H(+). It carries out the reaction L-threonyl-[protein] + ATP = O-phospho-L-threonyl-[protein] + ADP + H(+). The enzyme catalyses L-tyrosyl-[protein] + ATP = O-phospho-L-tyrosyl-[protein] + ADP + H(+). Functionally, may be an autophosphorylating tyrosine kinase, a bifunctional (serine/tyrosine-specific) protein kinase, or a serine kinase that is a substrate for an associated tyrosine kinase. MCK1 is a transcriptional activator of IME1, it stimulates spore maturation, and play a positive regulatory role in both mitotic centromere function and activation of early meiotic gene expression. In Saccharomyces cerevisiae (strain ATCC 204508 / S288c) (Baker's yeast), this protein is Protein kinase MCK1 (MCK1).